Here is a 352-residue protein sequence, read N- to C-terminus: Nodal homolog 4-B (352 aa).

Residues 1 to 18 (MHLYFSCFILLFVPGGKS) form the signal peptide. The propeptide occupies 19–278 (LGINSHLKHM…TIANSRRHRR (260 aa)). Asn30, Asn37, Asn199, and Asn238 each carry an N-linked (GlcNAc...) asparagine glycan. The disordered stretch occupies residues 197-223 (GKNHSEGHMKQPKKLHRAKSAERRYQQ).

Belongs to the TGF-beta family. As to quaternary structure, homodimer; disulfide-linked.

The protein localises to the secreted. Cooperation and regulatory loops of multiple nodals are essential for mesendoderm patterning in early embryos. Plays a role in mesoderm formation and may be required for neural development. This chain is Nodal homolog 4-B (nodal4-b), found in Xenopus laevis (African clawed frog).